Reading from the N-terminus, the 322-residue chain is Quinolinate synthase (322 aa).

Residues His38 and Ser55 each coordinate iminosuccinate. Cys100 contributes to the [4Fe-4S] cluster binding site. Iminosuccinate-binding positions include 126–128 and Ser143; that span reads YIN. Position 186 (Cys186) interacts with [4Fe-4S] cluster. Iminosuccinate is bound by residues 212 to 214 and Thr229; that span reads HPE. [4Fe-4S] cluster is bound at residue Cys279.

Belongs to the quinolinate synthase family. Type 2 subfamily. Requires [4Fe-4S] cluster as cofactor.

The protein resides in the cytoplasm. The enzyme catalyses iminosuccinate + dihydroxyacetone phosphate = quinolinate + phosphate + 2 H2O + H(+). It participates in cofactor biosynthesis; NAD(+) biosynthesis; quinolinate from iminoaspartate: step 1/1. Functionally, catalyzes the condensation of iminoaspartate with dihydroxyacetone phosphate to form quinolinate. The protein is Quinolinate synthase of Aquifex aeolicus (strain VF5).